Consider the following 1088-residue polypeptide: Neural cell adhesion molecule 1-A (1088 aa).

Positions 1–19 (MLHIKDLIWTLYFIGTAVA) are cleaved as a signal peptide. Ig-like C2-type domains lie at 20–108 (LEVN…GTVN), 113–202 (QKLT…KDIQ), 209–294 (PTIQ…AEAT), 303–397 (PKIT…FEVQ), and 400–484 (PKIR…HEFS). Topologically, residues 20–705 (LEVNIVPDQG…TASAGTGLGT (686 aa)) are extracellular. 2 disulfides stabilise this stretch: C41–C93 and C136–C186. N82 is a glycosylation site (N-linked (GlcNAc...) asparagine). Residues 149 to 153 (RHKGK) and 158 to 162 (KKDVR) each bind heparin. Residue N219 is glycosylated (N-linked (GlcNAc...) asparagine). C232 and C282 are joined by a disulfide. 5 N-linked (GlcNAc...) asparagine glycosylation sites follow: N310, N341, N417, N443, and N472. C323 and C379 are joined by a disulfide. A disulfide bridge links C420 with C473. Fibronectin type-III domains are found at residues 493 to 592 (TPSS…TQPV) and 594 to 690 (EPSA…TAKP). The chain crosses the membrane as a helical span at residues 706–723 (GAIVGILIVIFVLLLVVV). Over 724–1088 (DVTCFFLNKC…TQTNANESKA (365 aa)) the chain is Cytoplasmic. The span at 758-784 (EGKAAFSKDESKEPIVEVRTEEERTPN) shows a compositional bias: basic and acidic residues. Disordered regions lie at residues 758–802 (EGKA…LTEP), 829–1000 (FATA…DGGT), and 1024–1088 (VASG…ESKA). Composition is skewed to low complexity over residues 835-847 (SPTS…TSST), 854-875 (APDS…APTT), and 913-936 (PSAA…VPPN). Polar residues predominate over residues 965 to 974 (QPSTVKNPTE). Positions 1046–1064 (AKTEKTQVEEKSKPEEIDV) are enriched in basic and acidic residues. Residues 1076–1088 (NEATQTNANESKA) are compositionally biased toward polar residues.

Post-translationally, polysialylated by ST8SIA2 and ST8SIA4. Polysialylation modulates cell interactions by confering both attractive and repulsive properties that are highly regulated by ST8SIA2 and ST8SIA4. Polysialylation is formed on a-2,3-linked sialic acid of core glycans. As to expression, expressed in neuron and in presumptive neural tissue.

The protein localises to the cell membrane. Its function is as follows. This protein is a cell adhesion molecule involved in neuron-neuron adhesion, neurite fasciculation, outgrowth of neurites, etc. The chain is Neural cell adhesion molecule 1-A from Xenopus laevis (African clawed frog).